A 188-amino-acid polypeptide reads, in one-letter code: Elongation factor P-like protein (188 aa).

This sequence belongs to the elongation factor P family.

This Xanthomonas campestris pv. campestris (strain 8004) protein is Elongation factor P-like protein.